The chain runs to 466 residues: MNDLAISLPTPAAGAAAPRIGFVSLGCPKALTDSELILTQLSAEGYATSKTFQGADLVIVNTCGFIDDAVRESLDTIGEALAENGKVIVTGCLGAKTGDGGGNLVRQMHPSVLAVTGPHATQEVMDAVHQHVPKPHDPFVDLVPPAGIKLTPKHYAYLKISEGCNHRCSFCIIPSMRGDLVSRPIGDVLTEAQRLFEGGVKELLVISQDTSAYGVDVKYRTGFWDGKPVKTRMLDLVAQLGELARKHGAWVRLHYVYPYPHVDEVLPLMAEGLVLPYLDVPFQHAHPDVLKRMKRPASGERNLERLLKWREACPQIVVRSTFIAGFPGETEAEFEYLLDFLKEAQIDRAGCFAYSPIEGAPANLLDGALPDAVREERRARFMAVAEAVSTAKLQRRVGSSMQVLVDSAPAMGRKGGVGRSYADAPEIDGTVKILPPSKASKTMKVGEFSRVRIVGSQGHDLIGELI.

Residues 18-133 (PRIGFVSLGC…VMDAVHQHVP (116 aa)) form the MTTase N-terminal domain. Residues C27, C63, C92, C164, C168, and C171 each coordinate [4Fe-4S] cluster. Residues 150-391 (LTPKHYAYLK…MAVAEAVSTA (242 aa)) form the Radical SAM core domain. The TRAM domain occupies 394-466 (QRRVGSSMQV…QGHDLIGELI (73 aa)).

It belongs to the methylthiotransferase family. RimO subfamily. [4Fe-4S] cluster is required as a cofactor.

It is found in the cytoplasm. The enzyme catalyses L-aspartate(89)-[ribosomal protein uS12]-hydrogen + (sulfur carrier)-SH + AH2 + 2 S-adenosyl-L-methionine = 3-methylsulfanyl-L-aspartate(89)-[ribosomal protein uS12]-hydrogen + (sulfur carrier)-H + 5'-deoxyadenosine + L-methionine + A + S-adenosyl-L-homocysteine + 2 H(+). In terms of biological role, catalyzes the methylthiolation of an aspartic acid residue of ribosomal protein uS12. This chain is Ribosomal protein uS12 methylthiotransferase RimO, found in Leptothrix cholodnii (strain ATCC 51168 / LMG 8142 / SP-6) (Leptothrix discophora (strain SP-6)).